A 546-amino-acid polypeptide reads, in one-letter code: uncharacterized protein (546 aa).

10 consecutive transmembrane segments (helical) span residues 106–126 (WWIV…SSVY), 145–165 (TLGS…FAPL), 172–192 (FIIY…GGCA), 231–251 (YVLP…PIIG), 263–283 (WTFW…FIFF), 332–352 (LIFT…VYII), 375–395 (GLSF…TPFI), 416–436 (LYPL…FAWT), 444–464 (WIVP…VFFV), and 510–530 (WATS…FIFY).

Belongs to the major facilitator superfamily. CAR1 family.

Its subcellular location is the endoplasmic reticulum membrane. This is an uncharacterized protein from Schizosaccharomyces pombe (strain 972 / ATCC 24843) (Fission yeast).